The following is a 648-amino-acid chain: Probable potassium transport system protein Kup 1 (648 aa).

The interval 1–31 (MSDAVTDADGSSAQSHAQSAGHHAVQGHGGH) is disordered. The span at 10–26 (GSSAQSHAQSAGHHAVQ) shows a compositional bias: low complexity. Helical transmembrane passes span 39 to 59 (LAVGAIGVVFGDIGTSPLYAL), 73 to 93 (LLHIYGIISLMFWSMMIIVTF), 130 to 150 (IILLGVFATALFYGDSMITPA), 165 to 185 (PDMHPLIVPLVVGILIGLFFI), 193 to 213 (VAAFFGPIMLVYFGTIAVLGA), 243 to 263 (FLAMGAAVLAVTGAEALYADM), 275 to 295 (WLVFVLPALVLNYLGQASLLI), 317 to 337 (LLFIASCAAVIASQAVISGAF), 364 to 384 (IFIPVINWALMIAVILLVLVF), 394 to 414 (YGIAVTGAMLIDNFLLAVVLF), 421 to 441 (APAAIAMLAVFFAIDAAYLGA), and 446 to 466 (IPDGGWVPLVMGIAIFTLLTT).

This sequence belongs to the HAK/KUP transporter (TC 2.A.72) family.

The protein resides in the cell inner membrane. It carries out the reaction K(+)(in) + H(+)(in) = K(+)(out) + H(+)(out). Its function is as follows. Transport of potassium into the cell. Likely operates as a K(+):H(+) symporter. The polypeptide is Probable potassium transport system protein Kup 1 (Novosphingobium aromaticivorans (strain ATCC 700278 / DSM 12444 / CCUG 56034 / CIP 105152 / NBRC 16084 / F199)).